We begin with the raw amino-acid sequence, 683 residues long: DNA ligase (683 aa).

Residues D36 to D40, S85 to L86, and E121 each bind NAD(+). The N6-AMP-lysine intermediate role is filled by K123. Residues R144, E180, K296, and K320 each contribute to the NAD(+) site. The Zn(2+) site is built by C413, C416, C431, and C437. The BRCT domain occupies P605–L683.

This sequence belongs to the NAD-dependent DNA ligase family. LigA subfamily. The cofactor is Mg(2+). Mn(2+) is required as a cofactor.

The enzyme catalyses NAD(+) + (deoxyribonucleotide)n-3'-hydroxyl + 5'-phospho-(deoxyribonucleotide)m = (deoxyribonucleotide)n+m + AMP + beta-nicotinamide D-nucleotide.. Its function is as follows. DNA ligase that catalyzes the formation of phosphodiester linkages between 5'-phosphoryl and 3'-hydroxyl groups in double-stranded DNA using NAD as a coenzyme and as the energy source for the reaction. It is essential for DNA replication and repair of damaged DNA. The chain is DNA ligase from Gluconobacter oxydans (strain 621H) (Gluconobacter suboxydans).